Consider the following 405-residue polypeptide: Peroxisomal membrane protein PEX13 (405 aa).

Residues 1-11 (MASQPPPPPKP) show a composition bias toward pro residues. The segment at 1 to 71 (MASQPPPPPK…SQQTGSNNVN (71 aa)) is disordered. Over 1 to 136 (MASQPPPPPK…SSRGAFQSIE (136 aa)) the chain is Peroxisomal matrix. The segment covering 61–71 (PSQQTGSNNVN) has biased composition (polar residues). A helical membrane pass occupies residues 137-157 (SIVHAFASVSMMMDATFSAVY). Positions 147–235 (MMMDATFSAV…EDQATNSAKS (89 aa)) are targeting to peroxisomes. Over 158 to 176 (NSFRAVLDVANHFSRLKIH) the chain is Cytoplasmic. Residues 177 to 194 (FTKVFSAFALVRTIRYLY) form a helical membrane-spanning segment. The tract at residues 177–198 (FTKVFSAFALVRTIRYLYRRLQ) is interaction with PEX19. Residues 195–235 (RRLQWMMGLRRGSENEDLWAESEGTVACLSAEDQATNSAKS) are Peroxisomal matrix-facing. Residues 236 to 256 (WPIFLFFAVILGGPYLIWKLL) form a helical membrane-spanning segment. Topologically, residues 257 to 405 (STHNDEVTDN…TGKNGDKQDL (149 aa)) are cytoplasmic. Residues 274 to 338 (DDHVVARAEY…PANYVKILGK (65 aa)) enclose the SH3 domain. Residue serine 356 is modified to Phosphoserine.

The protein belongs to the peroxin-13 family. In terms of assembly, interacts (via SH3 domain) with PEX14 (via SH3-binding motif); forming the PEX13-PEX14 docking complex. Interacts with PEX19.

Its subcellular location is the peroxisome membrane. Component of the PEX13-PEX14 docking complex, a translocon channel that specifically mediates the import of peroxisomal cargo proteins bound to PEX5 receptor. The PEX13-PEX14 docking complex forms a large import pore which can be opened to a diameter of about 9 nm. Mechanistically, PEX5 receptor along with cargo proteins associates with the PEX14 subunit of the PEX13-PEX14 docking complex in the cytosol, leading to the insertion of the receptor into the organelle membrane with the concomitant translocation of the cargo into the peroxisome matrix. Involved in the import of PTS1- and PTS2-type containing proteins. This is Peroxisomal membrane protein PEX13 from Mus musculus (Mouse).